Here is a 297-residue protein sequence, read N- to C-terminus: MHDGTLQRLFPAAKFDEPLRRYTAWKIGGPADALLEPSSIQELLSAVELAGEHGVPVTVLGGGTNVLVRDGGIRGLTIRLAKSLRGVKLSGETLVAEAGALYPVLANMTASRGLAGLEFATGIPGTVGGAVFMNAGAYGSETARVLLWADILRDGRVVRMGPEELGLSYRRSILHDHPGWVVLRAAYRLHPGDPEDLRERIREFRTLRMNGSPNRPSCGSTFKRPPGDFPGRVIEAAGLKGLRVGQIEVSTVHANYFVNLGGGTASDALRLMELVRERVRERLGVELEPEVRVVGEP.

One can recognise an FAD-binding PCMH-type domain in the interval 27–192 (IGGPADALLE…LRAAYRLHPG (166 aa)). Arg170 is a catalytic residue. Ser220 serves as the catalytic Proton donor. Glu290 is a catalytic residue.

This sequence belongs to the MurB family. FAD serves as cofactor.

It is found in the cytoplasm. The enzyme catalyses UDP-N-acetyl-alpha-D-muramate + NADP(+) = UDP-N-acetyl-3-O-(1-carboxyvinyl)-alpha-D-glucosamine + NADPH + H(+). It participates in cell wall biogenesis; peptidoglycan biosynthesis. Cell wall formation. The polypeptide is UDP-N-acetylenolpyruvoylglucosamine reductase (Rubrobacter xylanophilus (strain DSM 9941 / JCM 11954 / NBRC 16129 / PRD-1)).